Reading from the N-terminus, the 198-residue chain is Nucleoid occlusion factor SlmA (198 aa).

Positions 9–70 (RNRREEILQA…SLIEFIEDSL (62 aa)) constitute an HTH tetR-type domain. The segment at residues 33–52 (TTAKLAANVGVSEAALYRHF) is a DNA-binding region (H-T-H motif). Positions 119–144 (DRLQGRINQLYERIEVQLRQVLRERK) form a coiled coil.

The protein belongs to the nucleoid occlusion factor SlmA family. Homodimer. Interacts with FtsZ.

It is found in the cytoplasm. The protein localises to the nucleoid. Functionally, required for nucleoid occlusion (NO) phenomenon, which prevents Z-ring formation and cell division over the nucleoid. Acts as a DNA-associated cell division inhibitor that binds simultaneously chromosomal DNA and FtsZ, and disrupts the assembly of FtsZ polymers. SlmA-DNA-binding sequences (SBS) are dispersed on non-Ter regions of the chromosome, preventing FtsZ polymerization at these regions. This is Nucleoid occlusion factor SlmA from Sodalis glossinidius (strain morsitans).